The following is a 385-amino-acid chain: 8-amino-7-oxononanoate synthase (385 aa).

R21 provides a ligand contact to substrate. Residue 108–109 participates in pyridoxal 5'-phosphate binding; sequence GF. Substrate is bound at residue H133. 3 residues coordinate pyridoxal 5'-phosphate: S179, H207, and T233. K236 bears the N6-(pyridoxal phosphate)lysine mark. Residue T352 coordinates substrate.

The protein belongs to the class-II pyridoxal-phosphate-dependent aminotransferase family. BioF subfamily. In terms of assembly, homodimer. Pyridoxal 5'-phosphate is required as a cofactor.

It catalyses the reaction 6-carboxyhexanoyl-[ACP] + L-alanine + H(+) = (8S)-8-amino-7-oxononanoate + holo-[ACP] + CO2. Its pathway is cofactor biosynthesis; biotin biosynthesis. In terms of biological role, catalyzes the decarboxylative condensation of pimeloyl-[acyl-carrier protein] and L-alanine to produce 8-amino-7-oxononanoate (AON), [acyl-carrier protein], and carbon dioxide. This chain is 8-amino-7-oxononanoate synthase, found in Klebsiella pneumoniae (strain 342).